The following is a 5068-amino-acid chain: Protein piccolo (5068 aa).

Residues 1 to 20 show a composition bias toward low complexity; the sequence is MGNEASLEGEGLPEGLAAAA. 2 disordered regions span residues 1 to 143 and 173 to 524; these read MGNE…DFKE and FDLI…QAPA. Pro residues predominate over residues 93 to 102; sequence PGKPPDPGRP. 3 stretches are compositionally biased toward basic and acidic residues: residues 111 to 122, 133 to 143, and 185 to 199; these read RTTDTFRSEQKL, KESKSRTDFKE, and ETTK…DQGK. S212 carries the phosphoserine modification. Polar residues predominate over residues 232 to 241; it reads PSKSVSSQQA. A compositionally biased stretch (low complexity) spans 252–279; sequence AKPSQQSPAQTPAQQAKPVAQQPGPAKA. Over residues 319-334 the composition is skewed to polar residues; sequence TSLQQPGPKSLAQTPG. 2 stretches are compositionally biased toward pro residues: residues 391–407 and 416–487; these read PTKP…PQPQ and PQQP…PQPQ. A 10 X 10 AA tandem approximate repeats of P-A-K-P-Q-P-Q-Q-P-X region spans residues 401 to 500; the sequence is PAKPQPQQPV…LGKPSAQQPS (100 aa). Residues 495 to 508 are compositionally biased toward polar residues; that stretch reads SAQQPSKSISQTVT. The span at 515–524 shows a compositional bias: low complexity; sequence PPTSAAQAPA. A C4-type zinc finger spans residues 532 to 556; that stretch reads CPLCNTTELLLHTPEKANFNTCTEC. Disordered stretches follow at residues 594-867, 883-1005, 1057-1345, and 1364-1803; these read AAIP…TVTG, LIST…TELN, LGDM…PSDL, and VGEK…SDPE. Positions 610–625 are enriched in polar residues; the sequence is QPATASKSPVPSQQAS. The segment covering 626–644 has biased composition (basic and acidic residues); it reads PKKELPSKQDSPKAPESKK. A compositionally biased stretch (low complexity) spans 709-738; sequence SPSSAAATSKPAILSSQVQAQAQVTTAPPL. A compositionally biased stretch (basic and acidic residues) spans 782-795; it reads ESKDPVQKKEEPKK. Residues 809–830 show a composition bias toward low complexity; it reads VPKGSPTPSGTRPTTGQATPQS. A phosphoserine mark is found at S844 and S856. 2 stretches are compositionally biased toward polar residues: residues 856-865 and 883-893; these read SQPTTPQETV and LISTAGQQAPH. The residue at position 860 (T860) is a Phosphothreonine. The C4-type zinc finger occupies 997–1020; the sequence is CPLCRTELNVGSQDPPNFNTCTEC. Over residues 1073 to 1085 the composition is skewed to pro residues; the sequence is SPVPAPAEPPPQK. A compositionally biased stretch (basic and acidic residues) spans 1097 to 1116; it reads KETEVKAETEKQIPEKETPS. T1120 is subject to Phosphothreonine. Composition is skewed to basic and acidic residues over residues 1144–1165, 1172–1186, 1244–1253, and 1262–1283; these read PEKK…KKPP, LEEK…KLPP, PKDRQKESRD, and TAKE…DKSD. The span at 1290–1306 shows a compositional bias: polar residues; sequence PKSPQGLSDTGYSSDGI. Phosphoserine is present on residues S1292, S1302, S1303, S1332, S1334, S1337, S1338, and S1341. Residues 1319 to 1333 show a composition bias toward basic and acidic residues; that stretch reads SDEKDLLKGLKKDSF. The segment covering 1334–1343 has biased composition (low complexity); that stretch reads SQESSPSSPS. Positions 1374-1392 are enriched in polar residues; sequence PQKVSPEQPQDQQKTQTPS. Residues 1405–1444 are compositionally biased toward basic and acidic residues; that stretch reads KESQEKKVTSKKDSAQGFPSRKEHKENPELVDDLSPRRAS. A phosphoserine mark is found at S1439, S1451, S1452, S1454, S1457, S1481, S1484, S1505, and S1507. Residues 1499–1511 are compositionally biased toward acidic residues; sequence SADEDASGSEDEE. T1552 is modified (phosphothreonine). 3 positions are modified to phosphoserine: S1553, S1563, and S1575. Residues 1566 to 1575 are compositionally biased toward acidic residues; that stretch reads DEDDETFDES. Basic and acidic residues predominate over residues 1576 to 1587; it reads PELKFRETKSQE. Residues 1606–1624 are compositionally biased toward polar residues; that stretch reads ELNSTVTDKYSAESSQKKT. The span at 1628 to 1638 shows a compositional bias: acidic residues; sequence FDEEPELEMES. S1638 is modified (phosphoserine). T1640 is subject to Phosphothreonine. 2 positions are modified to phosphoserine: S1642 and S1647. Residues 1650-1667 show a composition bias toward polar residues; that stretch reads EGSSSLHASSFTPGTSPT. A compositionally biased stretch (acidic residues) spans 1707–1720; that stretch reads DSSEEEELREEEEL. A phosphoserine mark is found at S1708 and S1709. A compositionally biased stretch (basic and acidic residues) spans 1721 to 1734; that stretch reads LKEQEKQRELEQQQ. Phosphothreonine is present on T1760. Position 1766 is a phosphoserine (S1766). Residues 1775–1790 show a composition bias toward basic and acidic residues; that stretch reads EELRQAAEMEELHRSS. 4 positions are modified to phosphoserine: S1795, S1800, S1808, and S1829. Disordered stretches follow at residues 2104-2126 and 2261-2377; these read PSES…ISSV and EAEL…AAAA. The segment covering 2109–2126 has biased composition (low complexity); that stretch reads TSVPPSDTPSLTSSISSV. Positions 2277–2291 are enriched in polar residues; it reads TPSSQTKEQPGSPHS. Positions 2334–2368 are enriched in pro residues; sequence QPPPPPPPPPPPPPPPPPPPPPPLPPATSPKPPTY. Phosphoserine is present on S2495. T2686 carries O-linked (GlcNAc) threonine glycosylation. A glycan (O-linked (GlcNAc) serine) is linked at S2960. At T2998 the chain carries Phosphothreonine. 2 disordered regions span residues 3334 to 3443 and 3490 to 3556; these read KEEK…SKVS and KGGS…LYSP. At S3358 the chain carries Phosphoserine. The span at 3361-3370 shows a compositional bias: basic and acidic residues; the sequence is DDPRNLKKIV. S3372 carries the phosphoserine modification. T3376 and T3403 each carry phosphothreonine. The segment covering 3403–3412 has biased composition (acidic residues); that stretch reads TDDEDQDEWD. Polar residues predominate over residues 3495-3507; that stretch reads GCQTETDPDTQSP. A phosphoserine mark is found at S3506, S3514, S3545, S3549, S3555, S3558, S3561, S3582, S3608, S3610, and S3616. 2 disordered regions span residues 3576 to 3679 and 3760 to 3797; these read PLPD…RRRM and DYMS…QFIP. Composition is skewed to polar residues over residues 3636 to 3645 and 3661 to 3673; these read KGSQTTSGTQ and STGT…TMGT. Position 3763 is a phosphoserine (S3763). Residues 3773 to 3785 are compositionally biased toward basic and acidic residues; that stretch reads SRVESQHGIERPR. The segment covering 3787–3797 has biased composition (polar residues); the sequence is APQTEFSQFIP. 3 positions are modified to phosphoserine: S4016, S4042, and S4132. 2 disordered regions span residues 4207-4231 and 4254-4273; these read ADKP…GLDL and VSFG…LPIS. Residues 4210–4231 are compositionally biased toward low complexity; that stretch reads PYSSGSRSRPSSRPSSVYGLDL. A compositionally biased stretch (polar residues) spans 4257 to 4273; the sequence is GHSSSSARTKPTSLPIS. 5 positions are modified to phosphoserine: S4286, S4290, S4293, S4322, and S4358. Residues 4317–4339 are disordered; that stretch reads RDQFGSSHSLPEVQQHMREESRT. A PDZ domain is found at 4424–4518; sequence RIKITRDSKD…EAEICVRLDL (95 aa). Residues 4574–4620 are disordered; that stretch reads KGAHAHSGPTSAGSSSVPSPGQPGSPSVSKKKHGGSKPTDVSKTASH. Low complexity predominate over residues 4578-4601; the sequence is AHSGPTSAGSSSVPSPGQPGSPSV. At S4592 the chain carries Phosphoserine. Residues 4622–4751 form the C2 1 domain; the sequence is ITGEIQLQIN…SHLDNTPRWY (130 aa). Ca(2+) contacts are provided by D4651 and D4657. At S4706 the chain carries Phosphoserine. Ca(2+)-binding residues include D4721, D4723, S4726, and D4729. Disordered stretches follow at residues 4758-4834 and 4857-4891; these read ESIE…SVAQ and QPTK…SEGS. Composition is skewed to low complexity over residues 4766–4778 and 4805–4815; these read HSSQ…PKPS and SSPGSSKSSSE. The span at 4823–4834 shows a compositional bias: polar residues; it reads PSRSQSKTSVAQ. Residues 4870-4891 show a composition bias toward low complexity; sequence SVSTGSSGSSVGSGYSVDSEGS. A C2 2 domain is found at 4933-5058; it reads VMGEIKLALK…DLRKRIVNWH (126 aa).

Interacts with BSN, ERC2/CAST1, RIMS1 and UNC13A. Interacts (via C-terminus) with TRIO (via N-terminus). Interacts with CTBP1. Interacts with SIAH1; this interaction negatively regulates SIAH1 E3 ligase activity. Directly interacts with GIT1 and GIT2. It depends on Ca(2+) as a cofactor. Highly expressed in brain. Moderately expressed in pituitary gland and pancreatic islets. Low levels found in stomach.

The protein resides in the presynaptic active zone. Its function is as follows. Scaffold protein of the presynaptic cytomatrix at the active zone (CAZ) which is the place in the synapse where neurotransmitter is released. After synthesis, participates in the formation of Golgi-derived membranous organelles termed Piccolo-Bassoon transport vesicles (PTVs) that are transported along axons to sites of nascent synaptic contacts. At the presynaptic active zone, regulates the spatial organization of synaptic vesicle cluster, the protein complexes that execute membrane fusion and compensatory endocytosis. Organizes as well the readily releasable pool of synaptic vesicles and safeguards a fraction of them to be not immediately available for action potential-induced release. Also functions in processes other than assembly such as the regulation of specific presynaptic protein ubiquitination by interacting with SIAH1 or the regulation of presynaptic autophagy. Also mediates synapse to nucleus communication leading to reconfiguration of gene expression by associating with the transcriptional corepressor CTBP1 and by subsequently reducing the size of its pool available for nuclear import. The protein is Protein piccolo of Mus musculus (Mouse).